The chain runs to 454 residues: MNDARSITRRRFMTLTGSGLAMLGGGHAFAQGQPRLRIDPTEFQPVPIAITNFLPGSPSDGDVGNGVTQVITNNLKRSGLFAPIDQAAFIERISNIDVAPQFQNWKTINAQALVTGRMTRQPDGRLKAEFRLWDVVSGQQLAGQQYFTSPEYWRRIAHIISDQIYERMTGEKGYFDSRVVFVDETGPKERRVKRLAMMDQDGANVRYLTRGSDLVLTPRFSPNSQEITYMEFGQGDPKVYLFNIETGQREIVGNFPGMTFAPRFSPDGQRVIMSLQQGGNSNLFVMDLRSRSTTRLTDTPAIDTSPSYSPDGTRICFESDRGGRSQIYVMAAGGGAAQRISFSKDDTNATYSTPVWSPRGDYIAFTRQGGGQFSIGVMKPDGSGERLLTSGFHNEGPTFSPNGRVLMFFRDPGGSGGPSLYSVDISGRNELKVPTPGFASDPAWSPLLSSTAGQ.

The first 30 residues, 1–30 (MNDARSITRRRFMTLTGSGLAMLGGGHAFA), serve as a signal peptide directing secretion.

Belongs to the TolB family. In terms of assembly, the Tol-Pal system is composed of five core proteins: the inner membrane proteins TolA, TolQ and TolR, the periplasmic protein TolB and the outer membrane protein Pal. They form a network linking the inner and outer membranes and the peptidoglycan layer.

The protein resides in the periplasm. Part of the Tol-Pal system, which plays a role in outer membrane invagination during cell division and is important for maintaining outer membrane integrity. The sequence is that of Tol-Pal system protein TolB from Bradyrhizobium diazoefficiens (strain JCM 10833 / BCRC 13528 / IAM 13628 / NBRC 14792 / USDA 110).